We begin with the raw amino-acid sequence, 123 residues long: Small ribosomal subunit protein uS12 (123 aa).

Asp-89 carries the 3-methylthioaspartic acid modification. Residues 104–123 are disordered; that stretch reads SVGVKDRKKSRSKYGAKRPK. Residues 109-123 are compositionally biased toward basic residues; it reads DRKKSRSKYGAKRPK.

Belongs to the universal ribosomal protein uS12 family. In terms of assembly, part of the 30S ribosomal subunit. Contacts proteins S8 and S17. May interact with IF1 in the 30S initiation complex.

With S4 and S5 plays an important role in translational accuracy. Functionally, interacts with and stabilizes bases of the 16S rRNA that are involved in tRNA selection in the A site and with the mRNA backbone. Located at the interface of the 30S and 50S subunits, it traverses the body of the 30S subunit contacting proteins on the other side and probably holding the rRNA structure together. The combined cluster of proteins S8, S12 and S17 appears to hold together the shoulder and platform of the 30S subunit. The protein is Small ribosomal subunit protein uS12 of Pelobacter propionicus (strain DSM 2379 / NBRC 103807 / OttBd1).